The chain runs to 380 residues: Kappa-type opioid receptor (380 aa).

Residues 1–57 (MESPIQIFRGDPGPTCSPSACLLPNSSSWFPNWAESDSNGSVGSEDQQLESAHISPA) are Extracellular-facing. Asn-25 and Asn-39 each carry an N-linked (GlcNAc...) asparagine glycan. The chain crosses the membrane as a helical span at residues 58–85 (IPVIITAVYSVVFVVGLVGNSLVMFVII). At 86–95 (RYTKMKTATN) the chain is on the cytoplasmic side. A helical transmembrane segment spans residues 96-119 (IYIFNLALADALVTTTMPFQSAVY). At 120-132 (LMNSWPFGDVLCK) the chain is on the extracellular side. Cys-131 and Cys-210 form a disulfide bridge. A helical membrane pass occupies residues 133 to 154 (IVISIDYYNMFTSIFTLTMMSV). Over 155–173 (DRYIAVCHPVKALDFRTPL) the chain is Cytoplasmic. The chain crosses the membrane as a helical span at residues 174 to 196 (KAKIINICIWLLASSVGISAIVL). At 197-222 (GGTKVREDVDVIECSLQFPDDEYSWW) the chain is on the extracellular side. The helical transmembrane segment at 223 to 247 (DLFMKICVFVFAFVIPVLIIIVCYT) threads the bilayer. Residues 248–274 (LMILRLKSVRLLSGSREKDRNLRRITK) are Cytoplasmic-facing. A helical membrane pass occupies residues 275–296 (LVLVVVAVFIICWTPIHIFILV). At 297–311 (EALGSTSHSTAALSS) the chain is on the extracellular side. Residues 312 to 333 (YYFCIALGYTNSSLNPVLYAFL) traverse the membrane as a helical segment. Topologically, residues 334–380 (DENFKRCFRDFCFPIKMRMERQSTNRVRNTVQDPASMRDVGGMNKPV) are cytoplasmic. Cys-345 carries the S-palmitoyl cysteine lipid modification.

This sequence belongs to the G-protein coupled receptor 1 family. In terms of assembly, interacts with NHERF1. Interacts with GABARAPL1. As to expression, detected in brain (at protein level). Brain (neocortex, hippocampus, amygdala, medial habenula, hypothalamus, locus ceruleus, and parabrachial nucleus).

The protein resides in the cell membrane. Functionally, G-protein coupled opioid receptor that functions as a receptor for endogenous alpha-neoendorphins and dynorphins, but has low affinity for beta-endorphins. Also functions as a receptor for various synthetic opioids and for the psychoactive diterpene salvinorin A. Ligand binding causes a conformation change that triggers signaling via guanine nucleotide-binding proteins (G proteins) and modulates the activity of down-stream effectors, such as adenylate cyclase. Signaling leads to the inhibition of adenylate cyclase activity. Inhibits neurotransmitter release by reducing calcium ion currents and increasing potassium ion conductance. Plays a role in the perception of pain. Plays a role in mediating reduced physical activity upon treatment with synthetic opioids. Plays a role in the regulation of salivation in response to synthetic opioids. May play a role in arousal and regulation of autonomic and neuroendocrine functions. The polypeptide is Kappa-type opioid receptor (Oprk1) (Mus musculus (Mouse)).